Here is a 531-residue protein sequence, read N- to C-terminus: Transactivator/viroplasmin protein (531 aa).

2 disordered regions span residues Ala-80–Gly-101 and Cys-505–Val-531. 2 stretches are compositionally biased toward polar residues: residues Ser-91–Thr-100 and Cys-505–Glu-517. The span at Gly-518 to Val-531 shows a compositional bias: acidic residues.

It belongs to the caulimoviridae viroplasmin family.

It localises to the host cytoplasm. Enhances the translation of downstream ORFs on polycistronic mRNAs. The polypeptide is Transactivator/viroplasmin protein (Cestrum yellow leaf curling virus (CmYLCV)).